The chain runs to 359 residues: Fructose-bisphosphate aldolase (359 aa).

Serine 62 is a binding site for D-glyceraldehyde 3-phosphate. The active-site Proton donor is the aspartate 110. Zn(2+) is bound by residues histidine 111, aspartate 145, glutamate 175, and histidine 227. Dihydroxyacetone phosphate is bound at residue glycine 228. Residue histidine 265 participates in Zn(2+) binding. Dihydroxyacetone phosphate is bound by residues 266-268 and 287-290; these read GGS and NIDT.

It belongs to the class II fructose-bisphosphate aldolase family. In terms of assembly, homodimer. The cofactor is Zn(2+).

The catalysed reaction is beta-D-fructose 1,6-bisphosphate = D-glyceraldehyde 3-phosphate + dihydroxyacetone phosphate. It participates in carbohydrate degradation; glycolysis; D-glyceraldehyde 3-phosphate and glycerone phosphate from D-glucose: step 4/4. Functionally, catalyzes the aldol condensation of dihydroxyacetone phosphate (DHAP or glycerone-phosphate) with glyceraldehyde 3-phosphate (G3P) to form fructose 1,6-bisphosphate (FBP) in gluconeogenesis and the reverse reaction in glycolysis. The chain is Fructose-bisphosphate aldolase (fba) from Haemophilus influenzae (strain ATCC 51907 / DSM 11121 / KW20 / Rd).